Reading from the N-terminus, the 76-residue chain is Small ribosomal subunit protein uS17 (76 aa).

Belongs to the universal ribosomal protein uS17 family. In terms of assembly, part of the 30S ribosomal subunit.

Functionally, one of the primary rRNA binding proteins, it binds specifically to the 5'-end of 16S ribosomal RNA. This is Small ribosomal subunit protein uS17 from Ruegeria sp. (strain TM1040) (Silicibacter sp.).